We begin with the raw amino-acid sequence, 1145 residues long: MCSWRCAAARSHASANRCTPKERLGRQENRSAHCPGTIRSIRMEWSRWERQEFRCKRSFQRLGSSCEQFSPPMQNRRWEIERLPWRFSPVGKPFHFRDNVRAMRYVELHCRSNFSFLDGASHPDELVQRAAELGYEGLAITDRESIAGVVRGFSPAQELGLQYIVGTEVHPTDAPPMVLWPTDRAAYGRMCRMLSTGRMRCEKGRCELSFEDIAEHAQGILAGVIATDESRSIEDQHAHVNDSRQFLRGPFRDVFDDRGYLLASFHRGVDDAAKATWLRNLSLATDVPLLACGDVRYHSAERMALHDCVVAISQGKSVEQIQSDRLVNSQHHLRSLEEIAELYRDVPDAVARTIEVAQRCTFTLDQLKYEYPVELAPEGMTPIEHLKRLTWEGARGRWPNGVPEKVIETLRHEVTLIEDLQYEAYFLTVWDLVRFARSQEILCQGRGSAANSVVCYCLGITSVDPTHTDLLFERFISRERGEAPDIDVDFEHQRREEVLQYLYEKYGRDRAGMTAVVTCYRAKSAIREVGKALAISPDIIDAVAKLAGSYSRNPELPERCRDAGLDPDTPLGRRFLYLTETLIGFPRHLSQHVGGMVMTAGSLCELCVTENAAMPGRSVIQWNKDDLDDIGILKVDILALGMLSAIRRCFELVKDHHNRELSLSTIPPDDTPTYDMICAADTMGVFQIESRAQMSMLPRLKPRCYYDLVIEVAIVRPGPIQGNMVHPFLAARENPAAAKYPNDAIRKVLEKTLGVPIFQEQAMKLAVVAAGFTPGEADQLRRAMAAWRRPGVIDRFRTKLLEGMKANGLNGEFAENVFRQIRGFGEYGFPESHAASFALLVYASCYLKRHYPTAFCAALLDSQPMGFYAPAQLIRDAQQHGVQVLPVDINDSNIRSKLIPDLNRPHPKLRLGLQMVRGLPSAVAQKIIVARDANGPFANLHDLTTRAKLSRSNIATLADADALASIAQDRRAAVWQSLAQDDSGDSMPLLADLEPDCSVPEELVPMSPAEEVKNDYATTGLSLKAHPVSFWRDDLNALRCKRASDLPKLRDGVHVRVAGLVLMRQRPGTAKGITFVTMEDETGSMNLVLFAQVWKRFFKIARGSDAWIVDGKLENKKGVIHVIVGRVEDLSEKASGLKVPRRDFR.

It belongs to the DNA polymerase type-C family. DnaE2 subfamily.

Its subcellular location is the cytoplasm. The enzyme catalyses DNA(n) + a 2'-deoxyribonucleoside 5'-triphosphate = DNA(n+1) + diphosphate. In terms of biological role, DNA polymerase involved in damage-induced mutagenesis and translesion synthesis (TLS). It is not the major replicative DNA polymerase. The protein is Error-prone DNA polymerase of Rhodopirellula baltica (strain DSM 10527 / NCIMB 13988 / SH1).